We begin with the raw amino-acid sequence, 118 residues long: Large ribosomal subunit protein bL20c (118 aa).

This sequence belongs to the bacterial ribosomal protein bL20 family.

Its subcellular location is the plastid. Binds directly to 23S ribosomal RNA and is necessary for the in vitro assembly process of the 50S ribosomal subunit. It is not involved in the protein synthesizing functions of that subunit. The polypeptide is Large ribosomal subunit protein bL20c (Aneura mirabilis (Parasitic liverwort)).